The sequence spans 254 residues: 3-oxo-5-alpha-steroid 4-dehydrogenase 2 (254 aa).

Helical transmembrane passes span 8 to 28, 72 to 92, 146 to 166, and 206 to 226; these read SPVL…LYFA, PRSL…AHYF, FSLG…SDYI, and LATW…FLGL.

This sequence belongs to the steroid 5-alpha reductase family.

The protein resides in the microsome membrane. The protein localises to the endoplasmic reticulum membrane. The enzyme catalyses a 3-oxo-5alpha-steroid + NADP(+) = a 3-oxo-Delta(4)-steroid + NADPH + H(+). It carries out the reaction 17beta-hydroxy-5alpha-androstan-3-one + NADP(+) = testosterone + NADPH + H(+). The catalysed reaction is 5alpha-pregnane-3,20-dione + NADP(+) = progesterone + NADPH + H(+). Converts testosterone (T) into 5-alpha-dihydrotestosterone (DHT) and progesterone or corticosterone into their corresponding 5-alpha-3-oxosteroids. It plays a central role in sexual differentiation and androgen physiology. The sequence is that of 3-oxo-5-alpha-steroid 4-dehydrogenase 2 (SRD5A2) from Sus scrofa (Pig).